The primary structure comprises 421 residues: Tol-Pal system protein TolB (421 aa).

Residues methionine 1–alanine 16 form the signal peptide.

It belongs to the TolB family. The Tol-Pal system is composed of five core proteins: the inner membrane proteins TolA, TolQ and TolR, the periplasmic protein TolB and the outer membrane protein Pal. They form a network linking the inner and outer membranes and the peptidoglycan layer.

The protein localises to the periplasm. Its function is as follows. Part of the Tol-Pal system, which plays a role in outer membrane invagination during cell division and is important for maintaining outer membrane integrity. The polypeptide is Tol-Pal system protein TolB (Wolinella succinogenes (strain ATCC 29543 / DSM 1740 / CCUG 13145 / JCM 31913 / LMG 7466 / NCTC 11488 / FDC 602W) (Vibrio succinogenes)).